The primary structure comprises 819 residues: Lon protease (819 aa).

Residues 1 to 14 (MNSTNNTDSQNLDP) show a composition bias toward polar residues. Residues 1-41 (MNSTNNTDSQNLDPNASEVEKLLDESAEAEEKTDDHTPPSE) form a disordered region. A compositionally biased stretch (basic and acidic residues) spans 18–38 (EVEKLLDESAEAEEKTDDHTP). The Lon N-terminal domain occupies 42–239 (LFILPLNKRP…KALVLLKKEL (198 aa)). 392 to 399 (GPPGVGKT) contacts ATP. The 185-residue stretch at 634–818 (KTPVGVATGL…DDVFKIAFPG (185 aa)) folds into the Lon proteolytic domain. Active-site residues include serine 724 and lysine 767.

Belongs to the peptidase S16 family. Homohexamer. Organized in a ring with a central cavity.

It is found in the cytoplasm. The catalysed reaction is Hydrolysis of proteins in presence of ATP.. ATP-dependent serine protease that mediates the selective degradation of mutant and abnormal proteins as well as certain short-lived regulatory proteins. Required for cellular homeostasis and for survival from DNA damage and developmental changes induced by stress. Degrades polypeptides processively to yield small peptide fragments that are 5 to 10 amino acids long. Binds to DNA in a double-stranded, site-specific manner. The chain is Lon protease from Chlamydia muridarum (strain MoPn / Nigg).